The chain runs to 310 residues: MSQAIVVAALYKFVTLEDYIELREPLLQAMLDNNVKGTLLLAHEGINGTVSATREGIDGLLAWLRNDPRLVDVDHKESYCDEQPFYRTKVKLKKEIVTLGVPGVDPNQAVGTYVEPKDWNALISDPEVLLIDTRNDYEVAIGTFKGAIDPKTETFREFPEYIKANFDPSKHKKVAMFCTGGIRCEKASSYMLGEGFDAVYHLKGGILKYFEEVPQEESLWDGDCFVFDNRVTVRHDLSEGEYDQCHACRHPINAQERASEHYSPGVSCPHCWDTLSEKTRRSAIDRQKQIELAKARNLPHPIGYNYKAEA.

The Rhodanese domain occupies Ser-124–Ser-218. Residue Cys-178 is the Cysteine persulfide intermediate of the active site.

The protein belongs to the TrhO family.

It carries out the reaction uridine(34) in tRNA + AH2 + O2 = 5-hydroxyuridine(34) in tRNA + A + H2O. Its function is as follows. Catalyzes oxygen-dependent 5-hydroxyuridine (ho5U) modification at position 34 in tRNAs. This Pseudomonas putida (strain GB-1) protein is tRNA uridine(34) hydroxylase.